The following is a 122-amino-acid chain: Riboflavin kinase (122 aa).

Gly-4–Ala-9 is a binding site for CDP. Residues Thr-33 and Asn-35 each contribute to the Mg(2+) site. Residues Thr-84 and Glu-92 each coordinate FMN. Residue Val-97 to Arg-100 coordinates CDP.

This sequence belongs to the archaeal riboflavin kinase family. Mg(2+) serves as cofactor.

It carries out the reaction riboflavin + CTP = CDP + FMN + H(+). Its pathway is cofactor biosynthesis; FMN biosynthesis; FMN from riboflavin (CTP route): step 1/1. In terms of biological role, catalyzes the CTP-dependent phosphorylation of riboflavin (vitamin B2) to form flavin mononucleotide (FMN). The sequence is that of Riboflavin kinase from Methanothermobacter thermautotrophicus (strain ATCC 29096 / DSM 1053 / JCM 10044 / NBRC 100330 / Delta H) (Methanobacterium thermoautotrophicum).